The sequence spans 559 residues: Potassium-transporting ATPase potassium-binding subunit (559 aa).

Transmembrane regions (helical) follow at residues 7–27, 63–83, 132–152, 170–190, 253–273, 283–303, 327–347, 356–376, 379–399, 416–436, 484–504, and 524–544; these read LLIASFLLILLVLAKPLGSGL, LLALLTLNLLGLSILFCLLFW, GLTVQNFLSAATGIAVVFALI, LVRITLWILFPVALIIALFFI, MVQMLAIFLIPAALCFAFGEA, LLWAMSFIFVVCVAVVMWAEV, FGVLASSLFAVVTTAASCGAV, ALGGMVPMWLMQIGEVVFGGV, GLYGMLLFVLLAVFIAGLMIG, MTALAILVTPMLVLLGSALAM, LLAFCMFVGRFGVIIPVMAIA, and GALFIGLLIGTVLLVGALTFI.

The protein belongs to the KdpA family. As to quaternary structure, the system is composed of three essential subunits: KdpA, KdpB and KdpC.

Its subcellular location is the cell inner membrane. Part of the high-affinity ATP-driven potassium transport (or Kdp) system, which catalyzes the hydrolysis of ATP coupled with the electrogenic transport of potassium into the cytoplasm. This subunit binds the periplasmic potassium ions and delivers the ions to the membrane domain of KdpB through an intramembrane tunnel. This Salmonella arizonae (strain ATCC BAA-731 / CDC346-86 / RSK2980) protein is Potassium-transporting ATPase potassium-binding subunit.